We begin with the raw amino-acid sequence, 415 residues long: Serine hydroxymethyltransferase (415 aa).

Residues L122 and 126 to 128 contribute to the (6S)-5,6,7,8-tetrahydrofolate site; that span reads GHL. K230 carries the N6-(pyridoxal phosphate)lysine modification.

It belongs to the SHMT family. In terms of assembly, homodimer. The cofactor is pyridoxal 5'-phosphate.

It is found in the cytoplasm. The enzyme catalyses (6R)-5,10-methylene-5,6,7,8-tetrahydrofolate + glycine + H2O = (6S)-5,6,7,8-tetrahydrofolate + L-serine. Its pathway is one-carbon metabolism; tetrahydrofolate interconversion. It functions in the pathway amino-acid biosynthesis; glycine biosynthesis; glycine from L-serine: step 1/1. Functionally, catalyzes the reversible interconversion of serine and glycine with tetrahydrofolate (THF) serving as the one-carbon carrier. This reaction serves as the major source of one-carbon groups required for the biosynthesis of purines, thymidylate, methionine, and other important biomolecules. Also exhibits THF-independent aldolase activity toward beta-hydroxyamino acids, producing glycine and aldehydes, via a retro-aldol mechanism. The protein is Serine hydroxymethyltransferase of Leptothrix cholodnii (strain ATCC 51168 / LMG 8142 / SP-6) (Leptothrix discophora (strain SP-6)).